A 2179-amino-acid chain; its full sequence is Genome polyprotein (2179 aa).

4 disordered regions span residues Phe-503–Asp-531, Gln-623–Gln-678, Arg-703–Phe-738, and Glu-753–Met-847. Composition is skewed to polar residues over residues Asp-630–His-642 and Thr-659–Gln-678. Polar residues predominate over residues Ser-758 to Glu-770. Residues Ser-783 to Thr-806 show a composition bias toward low complexity. The segment covering Glu-819–Thr-831 has biased composition (acidic residues). The segment at Cys-1112–Cys-1125 adopts a CCHC-type zinc-finger fold. Asp-1226 (for protease activity; shared with dimeric partner) is an active-site residue. The Reverse transcriptase domain maps to Gln-1409–Phe-1591. 3 residues coordinate Mg(2+): Asp-1479, Asp-1542, and Asp-1543. 3 disordered regions span residues Gln-1822 to His-1848, Asn-2114 to Cys-2144, and Tyr-2160 to Val-2179. The segment covering Ser-1827–Thr-1840 has biased composition (low complexity). Over residues Pro-2120 to Cys-2144 the composition is skewed to basic residues. Over residues Thr-2162 to Val-2179 the composition is skewed to polar residues.

It belongs to the Petuviruses genome polyprotein family.

The enzyme catalyses DNA(n) + a 2'-deoxyribonucleoside 5'-triphosphate = DNA(n+1) + diphosphate. Its function is as follows. Encodes presumably for at least four polypeptides: Movement protein (MP), capsid protein (CP), Protease (PR), and reverse transcriptase (RT). This is Genome polyprotein from Petunia vein clearing virus (isolate Shepherd) (PVCV).